Consider the following 82-residue polypeptide: MVVIRMARGGAKKRPFYRIVVADKRSPRDGRFIEKLGFFNPLAKGGEERLKLDVAKAEAWLAKGAQPSDRVASLIKEAKKAA.

Belongs to the bacterial ribosomal protein bS16 family.

The protein is Small ribosomal subunit protein bS16 of Francisella tularensis subsp. tularensis (strain FSC 198).